The primary structure comprises 355 residues: Isopentenyl-diphosphate delta-isomerase (355 aa).

A substrate-binding site is contributed by 6–7; that stretch reads RK. Residues 62–64, serine 93, and asparagine 122 contribute to the FMN site; that span reads AMT. Residue glutamine 152 participates in substrate binding. Glutamate 153 provides a ligand contact to Mg(2+). FMN is bound by residues lysine 184, threonine 214, 258-259, and 280-281; these read GG and AG.

The protein belongs to the IPP isomerase type 2 family. In terms of assembly, homooctamer. Dimer of tetramers. FMN serves as cofactor. NADPH is required as a cofactor. The cofactor is Mg(2+).

The protein resides in the cytoplasm. It carries out the reaction isopentenyl diphosphate = dimethylallyl diphosphate. Functionally, involved in the biosynthesis of isoprenoids. Catalyzes the 1,3-allylic rearrangement of the homoallylic substrate isopentenyl (IPP) to its allylic isomer, dimethylallyl diphosphate (DMAPP). This chain is Isopentenyl-diphosphate delta-isomerase, found in Bacillus pumilus (strain SAFR-032).